We begin with the raw amino-acid sequence, 434 residues long: Serine hydroxymethyltransferase 2 (434 aa).

Residues leucine 136 and 140–142 (GHL) each bind (6S)-5,6,7,8-tetrahydrofolate. Residue lysine 245 is modified to N6-(pyridoxal phosphate)lysine.

This sequence belongs to the SHMT family. As to quaternary structure, homodimer. Pyridoxal 5'-phosphate serves as cofactor.

The protein localises to the cytoplasm. The enzyme catalyses (6R)-5,10-methylene-5,6,7,8-tetrahydrofolate + glycine + H2O = (6S)-5,6,7,8-tetrahydrofolate + L-serine. Its pathway is one-carbon metabolism; tetrahydrofolate interconversion. The protein operates within amino-acid biosynthesis; glycine biosynthesis; glycine from L-serine: step 1/1. Functionally, catalyzes the reversible interconversion of serine and glycine with tetrahydrofolate (THF) serving as the one-carbon carrier. This reaction serves as the major source of one-carbon groups required for the biosynthesis of purines, thymidylate, methionine, and other important biomolecules. Also exhibits THF-independent aldolase activity toward beta-hydroxyamino acids, producing glycine and aldehydes, via a retro-aldol mechanism. This Rhodopseudomonas palustris (strain ATCC BAA-98 / CGA009) protein is Serine hydroxymethyltransferase 2.